The chain runs to 193 residues: Acyl carrier protein phosphodiesterase (193 aa).

This sequence belongs to the AcpH family.

It catalyses the reaction holo-[ACP] + H2O = apo-[ACP] + (R)-4'-phosphopantetheine + H(+). In terms of biological role, converts holo-ACP to apo-ACP by hydrolytic cleavage of the phosphopantetheine prosthetic group from ACP. In Escherichia coli O6:K15:H31 (strain 536 / UPEC), this protein is Acyl carrier protein phosphodiesterase.